The following is a 516-amino-acid chain: Rho guanine nucleotide exchange factor 9 (516 aa).

The SH3 domain occupies Asp8–Asn67. An interaction with GPHN region spans residues Arg100–Glu110. In terms of domain architecture, DH spans Met103–Arg287. The 108-residue stretch at Glu318–Lys425 folds into the PH domain. Positions Pro453–Tyr480 are disordered. Position 502 is a phosphoserine (Ser502).

In terms of assembly, interacts with GPHN. As to expression, detected in brain. Detected at low levels in heart.

The protein resides in the cytoplasm. Its subcellular location is the postsynaptic density. Its function is as follows. Acts as a guanine nucleotide exchange factor (GEF) for CDC42. Promotes formation of GPHN clusters. The polypeptide is Rho guanine nucleotide exchange factor 9 (ARHGEF9) (Homo sapiens (Human)).